Reading from the N-terminus, the 394-residue chain is Nuclear hormone receptor family member nhr-103 (394 aa).

The nuclear receptor DNA-binding region spans 8–83 (SGPCEICGQK…VGMDSKKFQT (76 aa)). Residues 11–31 (CEICGQKTSGRHFGVLSCRSC) form an NR C4-type zinc finger. An NR C4-type; degenerate zinc finger spans residues 47–66 (QCVKGTCKIFEDGKFNCKQC). Positions 126–394 (YLVDMAKNLL…FSHPEMFETT (269 aa)) constitute an NR LBD domain.

This sequence belongs to the nuclear hormone receptor family.

The protein localises to the nucleus. In terms of biological role, orphan nuclear receptor. This is Nuclear hormone receptor family member nhr-103 (nhr-103) from Caenorhabditis elegans.